The primary structure comprises 376 residues: Chaperone protein DnaJ (376 aa).

The J domain maps to 5–70; that stretch reads DFYEVLGVGR…DKKAAYDQFG (66 aa). The CR-type zinc finger occupies 132-210; sequence GLTKELRIPT…CHGEGRVEKS (79 aa). Residues cysteine 145, cysteine 148, cysteine 162, cysteine 165, cysteine 184, cysteine 187, cysteine 198, and cysteine 201 each contribute to the Zn(2+) site. CXXCXGXG motif repeat units lie at residues 145–152, 162–169, 184–191, and 198–205; these read CDACDGSG, CGTCHGQG, CPTCHGRG, and CNKCHGEG.

This sequence belongs to the DnaJ family. As to quaternary structure, homodimer. Requires Zn(2+) as cofactor.

It localises to the cytoplasm. Participates actively in the response to hyperosmotic and heat shock by preventing the aggregation of stress-denatured proteins and by disaggregating proteins, also in an autonomous, DnaK-independent fashion. Unfolded proteins bind initially to DnaJ; upon interaction with the DnaJ-bound protein, DnaK hydrolyzes its bound ATP, resulting in the formation of a stable complex. GrpE releases ADP from DnaK; ATP binding to DnaK triggers the release of the substrate protein, thus completing the reaction cycle. Several rounds of ATP-dependent interactions between DnaJ, DnaK and GrpE are required for fully efficient folding. Also involved, together with DnaK and GrpE, in the DNA replication of plasmids through activation of initiation proteins. This chain is Chaperone protein DnaJ, found in Shewanella halifaxensis (strain HAW-EB4).